We begin with the raw amino-acid sequence, 128 residues long: Large ribosomal subunit protein bL17 (128 aa).

Belongs to the bacterial ribosomal protein bL17 family. Part of the 50S ribosomal subunit. Contacts protein L32.

The sequence is that of Large ribosomal subunit protein bL17 from Streptococcus equi subsp. zooepidemicus (strain H70).